The sequence spans 335 residues: Deoxyhypusine hydroxylase (335 aa).

5 HEAT-like PBS-type repeats span residues 71-97 (LKHE…VAKD), 104-130 (CRHE…LRDN), 200-233 (LRYR…GLKD), 238-264 (FRHE…ALSN), and 271-298 (VRHE…FLND). Residues histidine 73, glutamate 74, histidine 106, and glutamate 107 each coordinate Fe cation. Histidine 240, glutamate 241, histidine 273, and glutamate 274 together coordinate Fe cation.

It belongs to the deoxyhypusine hydroxylase family. The cofactor is Fe(2+).

Its subcellular location is the cytoplasm. It localises to the nucleus. The enzyme catalyses [eIF5A protein]-deoxyhypusine + AH2 + O2 = [eIF5A protein]-hypusine + A + H2O. It participates in protein modification; eIF5A hypusination. Its function is as follows. Catalyzes the hydroxylation of the N(6)-(4-aminobutyl)-L-lysine intermediate to form hypusine, an essential post-translational modification only found in mature eIF-5A factor. The sequence is that of Deoxyhypusine hydroxylase (lia1) from Neosartorya fischeri (strain ATCC 1020 / DSM 3700 / CBS 544.65 / FGSC A1164 / JCM 1740 / NRRL 181 / WB 181) (Aspergillus fischerianus).